We begin with the raw amino-acid sequence, 599 residues long: Elongation factor 4 (599 aa).

In terms of domain architecture, tr-type G spans 5–187 (SHIRNFSIIA…RLVTVIPAPE (183 aa)). GTP contacts are provided by residues 17 to 22 (DHGKST) and 134 to 137 (NKMD).

The protein belongs to the TRAFAC class translation factor GTPase superfamily. Classic translation factor GTPase family. LepA subfamily.

It localises to the cell inner membrane. The enzyme catalyses GTP + H2O = GDP + phosphate + H(+). Functionally, required for accurate and efficient protein synthesis under certain stress conditions. May act as a fidelity factor of the translation reaction, by catalyzing a one-codon backward translocation of tRNAs on improperly translocated ribosomes. Back-translocation proceeds from a post-translocation (POST) complex to a pre-translocation (PRE) complex, thus giving elongation factor G a second chance to translocate the tRNAs correctly. Binds to ribosomes in a GTP-dependent manner. This is Elongation factor 4 from Pseudomonas paraeruginosa (strain DSM 24068 / PA7) (Pseudomonas aeruginosa (strain PA7)).